The sequence spans 111 residues: Cytochrome c2 (111 aa).

4 residues coordinate heme c: Cys14, Cys17, His18, and Met83.

Belongs to the cytochrome c family. In terms of processing, binds 1 heme c group covalently per subunit.

Its function is as follows. Cytochrome c2 is found mainly in purple, non-sulfur, photosynthetic bacteria where it functions as the electron donor to the oxidized bacteriochlorophyll in the photophosphorylation pathway. However, it may also have a role in the respiratory chain and is found in some non-photosynthetic bacteria. In Agrobacterium tumefaciens (strain II Chrys), this protein is Cytochrome c2.